The chain runs to 820 residues: Inhibitor of nuclear factor kappa-B kinase epsilon subunit homolog 1 (820 aa).

A Protein kinase domain is found at 21–299 (LFNDESIGKG…TDIFEFQPVT (279 aa)). ATP contacts are provided by residues 27-35 (IGKGAYSEV) and Lys49. Asp149 acts as the Proton acceptor in catalysis. Residues 758 to 798 (SPNKEQFPKPEQDSILESSIDEGSTSFESTPPSSPPDVGSN) form a disordered region.

It belongs to the protein kinase superfamily. Ser/Thr protein kinase family. In terms of assembly, interacts with allo-1 (via N-terminus); the interaction is direct. In terms of tissue distribution, expressed in oocytes.

The protein localises to the cytoplasm. The catalysed reaction is L-seryl-[protein] + ATP = O-phospho-L-seryl-[protein] + ADP + H(+). It catalyses the reaction L-threonyl-[protein] + ATP = O-phospho-L-threonyl-[protein] + ADP + H(+). Functionally, serine/threonine-protein kinase, which plays a role in regulating allophagy, an autophagic process in which paternal organelles, including mitochondria and membranous organelles, are degraded in embryos. Phosphorylates the allophagy receptor allo-1, which is required for allophagy. The sequence is that of Inhibitor of nuclear factor kappa-B kinase epsilon subunit homolog 1 from Caenorhabditis elegans.